The chain runs to 240 residues: Ribose-5-phosphate isomerase A (240 aa).

Positions 1 to 23 are disordered; sequence MKTSGGSDAAKRRAGESAAETVT. Substrate is bound by residues 32–35, 92–95, and 111–114; these read TGST, DGAD, and KGGG. Glu-120 (proton acceptor) is an active-site residue. Position 138 (Lys-138) interacts with substrate.

Belongs to the ribose 5-phosphate isomerase family. In terms of assembly, homodimer.

It catalyses the reaction aldehydo-D-ribose 5-phosphate = D-ribulose 5-phosphate. It participates in carbohydrate degradation; pentose phosphate pathway; D-ribose 5-phosphate from D-ribulose 5-phosphate (non-oxidative stage): step 1/1. Its function is as follows. Catalyzes the reversible conversion of ribose-5-phosphate to ribulose 5-phosphate. The protein is Ribose-5-phosphate isomerase A of Halorubrum lacusprofundi (strain ATCC 49239 / DSM 5036 / JCM 8891 / ACAM 34).